A 216-amino-acid chain; its full sequence is Ephrin-A1 (216 aa).

The N-terminal stretch at 1–28 (MMELYRAAVQLIVGVGLGVGLWLREAQG) is a signal peptide. The 133-residue stretch at 29–161 (ERHIVFWNSS…RLRVHVSGRT (133 aa)) folds into the Ephrin RBD domain. N36 carries an N-linked (GlcNAc...) asparagine glycan. A disulfide bridge links C61 with C102. A disordered region spans residues 162–181 (TPPPVNVHTPRSHIQSDEPE). S195 carries the GPI-anchor amidated serine lipid modification. Positions 196 to 216 (AAPGTPCTLYGLLLAALLLRL) are cleaved as a propeptide — removed in mature form.

The protein belongs to the ephrin family. In terms of assembly, binds to the receptor tyrosine kinases EPHA2, EPHA4, EPHA5, EPHA6 and EPHA7. Also binds with low affinity to EPHA1.

Its subcellular location is the membrane. Functionally, cell surface GPI-bound ligand for Eph receptors, a family of receptor tyrosine kinases which are crucial for migration, repulsion and adhesion during neuronal, vascular and epithelial development. Binds promiscuously Eph receptors residing on adjacent cells, leading to contact-dependent bidirectional signaling into neighboring cells. This Xenopus laevis (African clawed frog) protein is Ephrin-A1 (efna1).